Reading from the N-terminus, the 458-residue chain is UDP-N-acetylmuramate--L-alanine ligase (458 aa).

112-118 (GTHGKTT) contributes to the ATP binding site.

Belongs to the MurCDEF family.

Its subcellular location is the cytoplasm. It catalyses the reaction UDP-N-acetyl-alpha-D-muramate + L-alanine + ATP = UDP-N-acetyl-alpha-D-muramoyl-L-alanine + ADP + phosphate + H(+). The protein operates within cell wall biogenesis; peptidoglycan biosynthesis. Its function is as follows. Cell wall formation. The chain is UDP-N-acetylmuramate--L-alanine ligase from Geotalea daltonii (strain DSM 22248 / JCM 15807 / FRC-32) (Geobacter daltonii).